The chain runs to 215 residues: Ribosomal RNA small subunit methyltransferase G (215 aa).

S-adenosyl-L-methionine contacts are provided by residues Gly-77, Phe-82, 130–131 (IE), and Arg-146.

Belongs to the methyltransferase superfamily. RNA methyltransferase RsmG family.

The protein localises to the cytoplasm. It carries out the reaction guanosine(527) in 16S rRNA + S-adenosyl-L-methionine = N(7)-methylguanosine(527) in 16S rRNA + S-adenosyl-L-homocysteine. Functionally, specifically methylates the N7 position of guanine in position 527 of 16S rRNA. In Bartonella henselae (strain ATCC 49882 / DSM 28221 / CCUG 30454 / Houston 1) (Rochalimaea henselae), this protein is Ribosomal RNA small subunit methyltransferase G.